An 81-amino-acid polypeptide reads, in one-letter code: ATP synthase subunit c (81 aa).

2 helical membrane-spanning segments follow: residues Met4–Ala24 and Val57–Ala77.

The protein belongs to the ATPase C chain family. In terms of assembly, F-type ATPases have 2 components, F(1) - the catalytic core - and F(0) - the membrane proton channel. F(1) has five subunits: alpha(3), beta(3), gamma(1), delta(1), epsilon(1). F(0) has three main subunits: a(1), b(2) and c(10-14). The alpha and beta chains form an alternating ring which encloses part of the gamma chain. F(1) is attached to F(0) by a central stalk formed by the gamma and epsilon chains, while a peripheral stalk is formed by the delta and b chains.

The protein localises to the cell membrane. F(1)F(0) ATP synthase produces ATP from ADP in the presence of a proton or sodium gradient. F-type ATPases consist of two structural domains, F(1) containing the extramembraneous catalytic core and F(0) containing the membrane proton channel, linked together by a central stalk and a peripheral stalk. During catalysis, ATP synthesis in the catalytic domain of F(1) is coupled via a rotary mechanism of the central stalk subunits to proton translocation. In terms of biological role, key component of the F(0) channel; it plays a direct role in translocation across the membrane. A homomeric c-ring of between 10-14 subunits forms the central stalk rotor element with the F(1) delta and epsilon subunits. The protein is ATP synthase subunit c of Mycobacterium leprae (strain TN).